The chain runs to 209 residues: Small ribosomal subunit protein uS4 (209 aa).

An S4 RNA-binding domain is found at 98–161 (TRLDNVVYRM…AKQLRVQEAL (64 aa)).

This sequence belongs to the universal ribosomal protein uS4 family. As to quaternary structure, part of the 30S ribosomal subunit. Contacts protein S5. The interaction surface between S4 and S5 is involved in control of translational fidelity.

In terms of biological role, one of the primary rRNA binding proteins, it binds directly to 16S rRNA where it nucleates assembly of the body of the 30S subunit. Its function is as follows. With S5 and S12 plays an important role in translational accuracy. The chain is Small ribosomal subunit protein uS4 from Stenotrophomonas maltophilia (strain R551-3).